Consider the following 569-residue polypeptide: Peptide transporter PTR_C (569 aa).

A compositionally biased stretch (basic and acidic residues) spans 1–25 (MSQNVDEKVVHDDASVIRSVDRSES). Residues 1-43 (MSQNVDEKVVHDDASVIRSVDRSESDSYPDSVSPEGAEPSEEE) form a disordered region. A helical transmembrane segment spans residues 54 to 74 (VPLACWLVAIVELAERFSYYG). Asparagine 98 is a glycosylation site (N-linked (GlcNAc...) asparagine). 3 helical membrane-spanning segments follow: residues 104 to 124 (ALSY…AWVA), 134 to 154 (ISIF…TSLP), and 159 to 179 (NTSL…TGGV). Asparagine 212 carries an N-linked (GlcNAc...) asparagine glycan. Transmembrane regions (helical) follow at residues 215–235 (IQNV…SVIA), 245–265 (FWAA…ALFL), 322–342 (ALYA…YGQM), 366–386 (IDSI…YPFI), 398–418 (IFWG…LQHF), 444–464 (VALQ…ASIT), 479–499 (SFIM…GIAL), and 510–530 (WTYT…WFLF).

It belongs to the major facilitator superfamily. Proton-dependent oligopeptide transporter (POT/PTR) (TC 2.A.17) family.

Its subcellular location is the cell membrane. It catalyses the reaction a dipeptide(out) + H(+)(out) = a dipeptide(in) + H(+)(in). The enzyme catalyses an L-amino acid tripeptide(out) + H(+)(out) = an L-amino acid tripeptide(in) + H(+)(in). Functionally, peptide transporter that exploits the inwardly directed proton motive force to facilitate the cellular uptake of di/tripeptides. Shows strong uptake specificity towards the dipeptides Tyr-Phe and Leu-Gly and the tripeptide Phe-Gly-Gly, when compared to PTR_A and PTR_B. Also able to import peptide-based antifungals such as the peptide-nucleoside drug nikkomycin Z as well as the glucosamine-6-phosphate synthase inhibitor, L-norvalyl-N3-(4-methoxyfumaroyl)-L-2,3-diaminopropionoic acid (Nva-FMDP). The protein is Peptide transporter PTR_C of Candidozyma auris (Yeast).